The sequence spans 426 residues: MLDLKRIRNNSNEIKESLNNRGEKFDVTVIDEVLKLDEERRNILVKVEVLKSKRNQVSSEVPKLKKEGKDVSNIVAEMKNLSEEIKGFDTTLAKIDEKIQYIMLRIPNIPNPQVPDGDTDEDNIEIRNWSEPTKFDFEPKAHWDIGSNLNILDFERAGKVTGSRFTFYKGLGARLERSLISYFLDTHTEKHGYTEILPPYMVNRTSMIGTGQLPKFEEDAFKISEDDYFLIPTAEVPVTNLYRDEILKGDELPLKHVAYSACFRSEAGSAGRDTRGLVRQHQFNKVELVKFTKPEQSYEELEKLTNDAETVLKELGIPYRVVRICKGDLGFTAALKYDLEVWMPSYNRYVEISSCSNFEDFQARRANIRYKEDAKAKPQYVHTLNGSGVAIGRTVAAILENYQNEDGSVTIPEVLRPYMGGKEAIK.

233–235 is an L-serine binding site; that stretch reads TAE. Residue 264–266 participates in ATP binding; the sequence is RSE. E287 provides a ligand contact to L-serine. ATP is bound at residue 351–354; that stretch reads EISS. S387 provides a ligand contact to L-serine.

Belongs to the class-II aminoacyl-tRNA synthetase family. Type-1 seryl-tRNA synthetase subfamily. As to quaternary structure, homodimer. The tRNA molecule binds across the dimer.

The protein localises to the cytoplasm. It catalyses the reaction tRNA(Ser) + L-serine + ATP = L-seryl-tRNA(Ser) + AMP + diphosphate + H(+). The catalysed reaction is tRNA(Sec) + L-serine + ATP = L-seryl-tRNA(Sec) + AMP + diphosphate + H(+). Its pathway is aminoacyl-tRNA biosynthesis; selenocysteinyl-tRNA(Sec) biosynthesis; L-seryl-tRNA(Sec) from L-serine and tRNA(Sec): step 1/1. Functionally, catalyzes the attachment of serine to tRNA(Ser). Is also able to aminoacylate tRNA(Sec) with serine, to form the misacylated tRNA L-seryl-tRNA(Sec), which will be further converted into selenocysteinyl-tRNA(Sec). This chain is Serine--tRNA ligase, found in Clostridium botulinum (strain Hall / ATCC 3502 / NCTC 13319 / Type A).